We begin with the raw amino-acid sequence, 308 residues long: Quinolinate synthase (308 aa).

H24 and S41 together coordinate iminosuccinate. C86 provides a ligand contact to [4Fe-4S] cluster. Iminosuccinate contacts are provided by residues 112–114 and S129; that span reads YIN. C172 is a binding site for [4Fe-4S] cluster. Iminosuccinate-binding positions include 198-200 and T215; that span reads HPE. Position 265 (C265) interacts with [4Fe-4S] cluster.

Belongs to the quinolinate synthase family. Type 2 subfamily. Requires [4Fe-4S] cluster as cofactor.

The protein localises to the cytoplasm. It carries out the reaction iminosuccinate + dihydroxyacetone phosphate = quinolinate + phosphate + 2 H2O + H(+). It participates in cofactor biosynthesis; NAD(+) biosynthesis; quinolinate from iminoaspartate: step 1/1. Its function is as follows. Catalyzes the condensation of iminoaspartate with dihydroxyacetone phosphate to form quinolinate. This chain is Quinolinate synthase, found in Sulfurihydrogenibium sp. (strain YO3AOP1).